The sequence spans 145 residues: Protein SprT-like (145 aa).

The SprT-like domain maps to 5 to 140; it reads DYVREVSLAD…ACGRCHGRLI (136 aa). H64 is a Zn(2+) binding site. Residue E65 is part of the active site. H68 contacts Zn(2+).

Belongs to the SprT family. Requires Zn(2+) as cofactor.

The protein resides in the cytoplasm. In Streptococcus equi subsp. equi (strain 4047), this protein is Protein SprT-like.